Here is a 1435-residue protein sequence, read N- to C-terminus: Gag-Pol polyprotein (1435 aa).

G2 is lipidated: N-myristoyl glycine; by host. The interval 7 to 31 (VLSGGELDRWEKIRLRPGGKKKYKL) is interaction with Gp41. The interaction with host CALM1 stretch occupies residues 8–43 (LSGGELDRWEKIRLRPGGKKKYKLKHIVWASRELER). The interaction with host AP3D1 stretch occupies residues 12 to 19 (ELDRWEKI). The segment at 14–33 (DRWEKIRLRPGGKKKYKLKH) is interaction with membrane phosphatidylinositol 4,5-bisphosphate and RNA. The Nuclear export signal motif lies at 16-22 (WEKIRLR). A Nuclear localization signal motif is present at residues 26 to 32 (KKKYKLK). An interaction with membrane phosphatidylinositol 4,5-bisphosphate region spans residues 73–77 (EELKS). The disordered stretch occupies residues 106–127 (EEQNKSKKKAQQAAADTGNSSQ). Y132 is subject to Phosphotyrosine; by host. Residues 189-227 (NTVGGHQAAMQMLKETINEEAAEWDRLHPVQAGPVAPGQ) form an interaction with human PPIA/CYPA and NUP153 region. Residues 277–363 (YSPSSILDIK…GGPGHKARVL (87 aa)) form a dimerization/Multimerization of capsid protein p24 region. 2 consecutive CCHC-type zinc fingers follow at residues 390–407 (VKCF…NCRA) and 411–428 (KGCW…DCTE). Residues 489–493 (PQITL) form a dimerization of protease region. One can recognise a Peptidase A2 domain in the interval 508–577 (KEALLDTGAD…TPVNIIGRNL (70 aa)). The For protease activity; shared with dimeric partner role is filled by D513. Dimerization of protease regions lie at residues 537-543 (GIGGFIK) and 576-588 (NLLT…LNFP). Positions 631 to 821 (EGKISKIGPE…PPFLWMGYEL (191 aa)) constitute a Reverse transcriptase domain. Positions 697, 772, and 773 each coordinate Mg(2+). Positions 814 to 822 (FLWMGYELH) are RT 'primer grip'. The Tryptophan repeat motif signature appears at 985 to 1001 (WEAWWTDYWQATWIPEW). One can recognise an RNase H type-1 domain in the interval 1021-1144 (IVGAETFYVD…VDKLVSAGIR (124 aa)). 4 residues coordinate Mg(2+): D1030, E1065, D1085, and D1136. The segment at 1150–1191 (DGIDKAQEEHEKYHTNWRAMASDFNLPPVVAKEIVASCNKCQ) adopts an Integrase-type zinc-finger fold. Zn(2+) is bound by residues H1159, H1163, C1187, and C1190. The region spanning 1201 to 1351 (VDCSPGIWQL…SAGERIVDII (151 aa)) is the Integrase catalytic domain. 3 residues coordinate Mg(2+): D1211, D1263, and E1299. A DNA-binding region (integrase-type) is located at residues 1370-1417 (FRVYYRDSRDPLWKGPAKLLWKGEGAVVIQDNSDIKVVPRRKAKIIRD).

Homotrimer; further assembles as hexamers of trimers. Interacts with gp41 (via C-terminus). Interacts with host CALM1; this interaction induces a conformational change in the Matrix protein, triggering exposure of the myristate group. Interacts with host AP3D1; this interaction allows the polyprotein trafficking to multivesicular bodies during virus assembly. Part of the pre-integration complex (PIC) which is composed of viral genome, matrix protein, Vpr and integrase. In terms of assembly, homodimer; the homodimer further multimerizes as homohexamers or homopentamers. Interacts with human PPIA/CYPA; This interaction stabilizes the capsid. Interacts with human NUP153. Interacts with host PDZD8; this interaction stabilizes the capsid. Interacts with monkey TRIM5; this interaction destabilizes the capsid. As to quaternary structure, homodimer, whose active site consists of two apposed aspartic acid residues. Heterodimer of p66 RT and p51 RT (RT p66/p51). Heterodimerization of RT is essential for DNA polymerase activity. The overall folding of the subdomains is similar in p66 RT and p51 RT but the spatial arrangements of the subdomains are dramatically different. In terms of assembly, homotetramer; may further associate as a homohexadecamer. Part of the pre-integration complex (PIC) which is composed of viral genome, matrix protein, Vpr and integrase. Interacts with human SMARCB1/INI1 and human PSIP1/LEDGF isoform 1. Interacts with human KPNA3; this interaction might play a role in nuclear import of the pre-integration complex. Interacts with human NUP153; this interaction might play a role in nuclear import of the pre-integration complex. Mg(2+) serves as cofactor. Specific enzymatic cleavages by the viral protease yield mature proteins. The protease is released by autocatalytic cleavage. The polyprotein is cleaved during and after budding, this process is termed maturation. Proteolytic cleavage of p66 RT removes the RNase H domain to yield the p51 RT subunit. Nucleocapsid protein p7 might be further cleaved after virus entry. In terms of processing, tyrosine phosphorylated presumably in the virion by a host kinase. Phosphorylation is apparently not a major regulator of membrane association. Post-translationally, phosphorylated possibly by host MAPK1; this phosphorylation is necessary for Pin1-mediated virion uncoating. Methylated by host PRMT6, impairing its function by reducing RNA annealing and the initiation of reverse transcription.

The protein resides in the host cell membrane. It localises to the host endosome. Its subcellular location is the host multivesicular body. It is found in the virion membrane. The protein localises to the host nucleus. The protein resides in the host cytoplasm. It localises to the virion. It carries out the reaction Specific for a P1 residue that is hydrophobic, and P1' variable, but often Pro.. The enzyme catalyses Endohydrolysis of RNA in RNA/DNA hybrids. Three different cleavage modes: 1. sequence-specific internal cleavage of RNA. Human immunodeficiency virus type 1 and Moloney murine leukemia virus enzymes prefer to cleave the RNA strand one nucleotide away from the RNA-DNA junction. 2. RNA 5'-end directed cleavage 13-19 nucleotides from the RNA end. 3. DNA 3'-end directed cleavage 15-20 nucleotides away from the primer terminus.. The catalysed reaction is 3'-end directed exonucleolytic cleavage of viral RNA-DNA hybrid.. It catalyses the reaction DNA(n) + a 2'-deoxyribonucleoside 5'-triphosphate = DNA(n+1) + diphosphate. Its activity is regulated as follows. Protease: The viral protease is inhibited by many synthetic protease inhibitors (PIs), such as amprenavir, atazanavir, indinavir, loprinavir, nelfinavir, ritonavir and saquinavir. Use of protease inhibitors in tritherapy regimens permit more ambitious therapeutic strategies. Reverse transcriptase/ribonuclease H: RT can be inhibited either by nucleoside RT inhibitors (NRTIs) or by non nucleoside RT inhibitors (NNRTIs). NRTIs act as chain terminators, whereas NNRTIs inhibit DNA polymerization by binding a small hydrophobic pocket near the RT active site and inducing an allosteric change in this region. Classical NRTIs are abacavir, adefovir (PMEA), didanosine (ddI), lamivudine (3TC), stavudine (d4T), tenofovir (PMPA), zalcitabine (ddC), and zidovudine (AZT). Classical NNRTIs are atevirdine (BHAP U-87201E), delavirdine, efavirenz (DMP-266), emivirine (I-EBU), and nevirapine (BI-RG-587). The tritherapies used as a basic effective treatment of AIDS associate two NRTIs and one NNRTI. Functionally, mediates, with Gag polyprotein, the essential events in virion assembly, including binding the plasma membrane, making the protein-protein interactions necessary to create spherical particles, recruiting the viral Env proteins, and packaging the genomic RNA via direct interactions with the RNA packaging sequence (Psi). Gag-Pol polyprotein may regulate its own translation, by the binding genomic RNA in the 5'-UTR. At low concentration, the polyprotein would promote translation, whereas at high concentration, the polyprotein would encapsidate genomic RNA and then shut off translation. Its function is as follows. Targets the polyprotein to the plasma membrane via a multipartite membrane-binding signal, that includes its myristoylated N-terminus. Matrix protein is part of the pre-integration complex. Implicated in the release from host cell mediated by Vpu. Binds to RNA. In terms of biological role, forms the conical core that encapsulates the genomic RNA-nucleocapsid complex in the virion. Most core are conical, with only 7% tubular. The core is constituted by capsid protein hexamer subunits. The core is disassembled soon after virion entry. Host restriction factors such as TRIM5-alpha or TRIMCyp bind retroviral capsids and cause premature capsid disassembly, leading to blocks in reverse transcription. Capsid restriction by TRIM5 is one of the factors which restricts HIV-1 to the human species. Host PIN1 apparently facilitates the virion uncoating. On the other hand, interactions with PDZD8 or CYPA stabilize the capsid. Encapsulates and protects viral dimeric unspliced genomic RNA (gRNA). Binds these RNAs through its zinc fingers. Acts as a nucleic acid chaperone which is involved in rearangement of nucleic acid secondary structure during gRNA retrotranscription. Also facilitates template switch leading to recombination. As part of the polyprotein, participates in gRNA dimerization, packaging, tRNA incorporation and virion assembly. Functionally, aspartyl protease that mediates proteolytic cleavages of Gag and Gag-Pol polyproteins during or shortly after the release of the virion from the plasma membrane. Cleavages take place as an ordered, step-wise cascade to yield mature proteins. This process is called maturation. Displays maximal activity during the budding process just prior to particle release from the cell. Also cleaves Nef and Vif, probably concomitantly with viral structural proteins on maturation of virus particles. Hydrolyzes host EIF4GI and PABP1 in order to shut off the capped cellular mRNA translation. The resulting inhibition of cellular protein synthesis serves to ensure maximal viral gene expression and to evade host immune response. Also mediates cleavage of host YTHDF3. Mediates cleavage of host CARD8, thereby activating the CARD8 inflammasome, leading to the clearance of latent HIV-1 in patient CD4(+) T-cells after viral reactivation; in contrast, HIV-1 can evade CARD8-sensing when its protease remains inactive in infected cells prior to viral budding. Its function is as follows. Multifunctional enzyme that converts the viral RNA genome into dsDNA in the cytoplasm, shortly after virus entry into the cell. This enzyme displays a DNA polymerase activity that can copy either DNA or RNA templates, and a ribonuclease H (RNase H) activity that cleaves the RNA strand of RNA-DNA heteroduplexes in a partially processive 3' to 5' endonucleasic mode. Conversion of viral genomic RNA into dsDNA requires many steps. A tRNA(3)-Lys binds to the primer-binding site (PBS) situated at the 5'-end of the viral RNA. RT uses the 3' end of the tRNA primer to perform a short round of RNA-dependent minus-strand DNA synthesis. The reading proceeds through the U5 region and ends after the repeated (R) region which is present at both ends of viral RNA. The portion of the RNA-DNA heteroduplex is digested by the RNase H, resulting in a ssDNA product attached to the tRNA primer. This ssDNA/tRNA hybridizes with the identical R region situated at the 3' end of viral RNA. This template exchange, known as minus-strand DNA strong stop transfer, can be either intra- or intermolecular. RT uses the 3' end of this newly synthesized short ssDNA to perform the RNA-dependent minus-strand DNA synthesis of the whole template. RNase H digests the RNA template except for two polypurine tracts (PPTs) situated at the 5'-end and near the center of the genome. It is not clear if both polymerase and RNase H activities are simultaneous. RNase H probably can proceed both in a polymerase-dependent (RNA cut into small fragments by the same RT performing DNA synthesis) and a polymerase-independent mode (cleavage of remaining RNA fragments by free RTs). Secondly, RT performs DNA-directed plus-strand DNA synthesis using the PPTs that have not been removed by RNase H as primers. PPTs and tRNA primers are then removed by RNase H. The 3' and 5' ssDNA PBS regions hybridize to form a circular dsDNA intermediate. Strand displacement synthesis by RT to the PBS and PPT ends produces a blunt ended, linear dsDNA copy of the viral genome that includes long terminal repeats (LTRs) at both ends. In terms of biological role, catalyzes viral DNA integration into the host chromosome, by performing a series of DNA cutting and joining reactions. This enzyme activity takes place after virion entry into a cell and reverse transcription of the RNA genome in dsDNA. The first step in the integration process is 3' processing. This step requires a complex comprising the viral genome, matrix protein, Vpr and integrase. This complex is called the pre-integration complex (PIC). The integrase protein removes 2 nucleotides from each 3' end of the viral DNA, leaving recessed CA OH's at the 3' ends. In the second step, the PIC enters cell nucleus. This process is mediated through integrase and Vpr proteins, and allows the virus to infect a non dividing cell. This ability to enter the nucleus is specific of lentiviruses, other retroviruses cannot and rely on cell division to access cell chromosomes. In the third step, termed strand transfer, the integrase protein joins the previously processed 3' ends to the 5' ends of strands of target cellular DNA at the site of integration. The 5'-ends are produced by integrase-catalyzed staggered cuts, 5 bp apart. A Y-shaped, gapped, recombination intermediate results, with the 5'-ends of the viral DNA strands and the 3' ends of target DNA strands remaining unjoined, flanking a gap of 5 bp. The last step is viral DNA integration into host chromosome. This involves host DNA repair synthesis in which the 5 bp gaps between the unjoined strands are filled in and then ligated. Since this process occurs at both cuts flanking the HIV genome, a 5 bp duplication of host DNA is produced at the ends of HIV-1 integration. Alternatively, Integrase may catalyze the excision of viral DNA just after strand transfer, this is termed disintegration. This is Gag-Pol polyprotein (gag-pol) from Human immunodeficiency virus type 1 group M subtype B (strain 89.6) (HIV-1).